The sequence spans 491 residues: Ketol-acid reductoisomerase (NADP(+)) (491 aa).

One can recognise a KARI N-terminal Rossmann domain in the interval 15 to 208 (AQLGKCRFMG…GGHRAGVLES (194 aa)). Residues 45–48 (CGAQ), Arg68, Arg76, Ser78, and 108–110 (DKQ) each bind NADP(+). His132 is a catalytic residue. Gly158 is a binding site for NADP(+). 2 consecutive KARI C-terminal knotted domains span residues 209–344 (SFVA…TAPQ) and 345–484 (FEGK…MTDM). Residues Asp217, Glu221, Glu389, and Glu393 each contribute to the Mg(2+) site. Ser414 provides a ligand contact to substrate.

Belongs to the ketol-acid reductoisomerase family. The cofactor is Mg(2+).

The catalysed reaction is (2R)-2,3-dihydroxy-3-methylbutanoate + NADP(+) = (2S)-2-acetolactate + NADPH + H(+). The enzyme catalyses (2R,3R)-2,3-dihydroxy-3-methylpentanoate + NADP(+) = (S)-2-ethyl-2-hydroxy-3-oxobutanoate + NADPH + H(+). It functions in the pathway amino-acid biosynthesis; L-isoleucine biosynthesis; L-isoleucine from 2-oxobutanoate: step 2/4. It participates in amino-acid biosynthesis; L-valine biosynthesis; L-valine from pyruvate: step 2/4. In terms of biological role, involved in the biosynthesis of branched-chain amino acids (BCAA). Catalyzes an alkyl-migration followed by a ketol-acid reduction of (S)-2-acetolactate (S2AL) to yield (R)-2,3-dihydroxy-isovalerate. In the isomerase reaction, S2AL is rearranged via a Mg-dependent methyl migration to produce 3-hydroxy-3-methyl-2-ketobutyrate (HMKB). In the reductase reaction, this 2-ketoacid undergoes a metal-dependent reduction by NADPH to yield (R)-2,3-dihydroxy-isovalerate. This is Ketol-acid reductoisomerase (NADP(+)) from Salmonella heidelberg (strain SL476).